The primary structure comprises 374 residues: UDP-N-acetylglucosamine--N-acetylmuramyl-(pentapeptide) pyrophosphoryl-undecaprenol N-acetylglucosamine transferase (374 aa).

Residues 13–15, Asn124, Arg165, Ser193, and Gln294 contribute to the UDP-N-acetyl-alpha-D-glucosamine site; that span reads TGG.

This sequence belongs to the glycosyltransferase 28 family. MurG subfamily.

The protein localises to the cell inner membrane. The enzyme catalyses di-trans,octa-cis-undecaprenyl diphospho-N-acetyl-alpha-D-muramoyl-L-alanyl-D-glutamyl-meso-2,6-diaminopimeloyl-D-alanyl-D-alanine + UDP-N-acetyl-alpha-D-glucosamine = di-trans,octa-cis-undecaprenyl diphospho-[N-acetyl-alpha-D-glucosaminyl-(1-&gt;4)]-N-acetyl-alpha-D-muramoyl-L-alanyl-D-glutamyl-meso-2,6-diaminopimeloyl-D-alanyl-D-alanine + UDP + H(+). The protein operates within cell wall biogenesis; peptidoglycan biosynthesis. In terms of biological role, cell wall formation. Catalyzes the transfer of a GlcNAc subunit on undecaprenyl-pyrophosphoryl-MurNAc-pentapeptide (lipid intermediate I) to form undecaprenyl-pyrophosphoryl-MurNAc-(pentapeptide)GlcNAc (lipid intermediate II). This is UDP-N-acetylglucosamine--N-acetylmuramyl-(pentapeptide) pyrophosphoryl-undecaprenol N-acetylglucosamine transferase from Sinorhizobium medicae (strain WSM419) (Ensifer medicae).